The sequence spans 1240 residues: ATP-dependent helicase/nuclease subunit A (1240 aa).

In terms of domain architecture, UvrD-like helicase ATP-binding spans Ser-12–Arg-485. Ala-33–Thr-40 serves as a coordination point for ATP. Positions Lys-497–Gly-804 constitute a UvrD-like helicase C-terminal domain.

It belongs to the helicase family. AddA subfamily. In terms of assembly, heterodimer of AddA and AddB/RexB. Mg(2+) is required as a cofactor.

It catalyses the reaction Couples ATP hydrolysis with the unwinding of duplex DNA by translocating in the 3'-5' direction.. It carries out the reaction ATP + H2O = ADP + phosphate + H(+). Functionally, the heterodimer acts as both an ATP-dependent DNA helicase and an ATP-dependent, dual-direction single-stranded exonuclease. Recognizes the chi site generating a DNA molecule suitable for the initiation of homologous recombination. The AddA nuclease domain is required for chi fragment generation; this subunit has the helicase and 3' -&gt; 5' nuclease activities. This chain is ATP-dependent helicase/nuclease subunit A, found in Bacillus cereus (strain AH820).